Consider the following 217-residue polypeptide: Probable transaldolase (217 aa).

Catalysis depends on K85, which acts as the Schiff-base intermediate with substrate.

It belongs to the transaldolase family. Type 3B subfamily.

It localises to the cytoplasm. It carries out the reaction D-sedoheptulose 7-phosphate + D-glyceraldehyde 3-phosphate = D-erythrose 4-phosphate + beta-D-fructose 6-phosphate. Its pathway is carbohydrate degradation; pentose phosphate pathway; D-glyceraldehyde 3-phosphate and beta-D-fructose 6-phosphate from D-ribose 5-phosphate and D-xylulose 5-phosphate (non-oxidative stage): step 2/3. Its function is as follows. Transaldolase is important for the balance of metabolites in the pentose-phosphate pathway. The chain is Probable transaldolase from Agathobacter rectalis (strain ATCC 33656 / DSM 3377 / JCM 17463 / KCTC 5835 / VPI 0990) (Eubacterium rectale).